Reading from the N-terminus, the 361-residue chain is Zygote arrest protein 1 (361 aa).

Disordered stretches follow at residues 68-129 (GPRP…PRSW) and 142-252 (GLSS…EQDK). Low complexity predominate over residues 116–128 (PRSPARAGRPPRS). A Phosphothreonine modification is found at threonine 155. Residues 238–252 (ASRDRASPQSTEQDK) are compositionally biased toward basic and acidic residues. The 3CxxC-type zinc finger occupies 263 to 346 (KYGYYHCKDC…RQDLCGRCKD (84 aa)).

Belongs to the ZAR1 family. Interacts with YBX2. In terms of processing, phosphorylation by CDK1 does not regulate formation of MARDO (mitochondria-associated ribonucleoprotein domain) membraneless compartment. Ubiquitinated and degradaded by the proteasome during oocyte meiotic maturation, leading to MARDO (mitochondria-associated ribonucleoprotein domain) membraneless compartment dissolution.

The protein resides in the cytoplasm. The protein localises to the cytoplasmic ribonucleoprotein granule. In terms of biological role, mRNA-binding protein that mediates formation of MARDO (mitochondria-associated ribonucleoprotein domain), a membraneless compartment that stores maternal mRNAs in oocytes. MARDO assembly around mitochondria is directed by an increase in mitochondrial membrane potential during oocyte growth. Promotes formation of MARDO phase-separated membraneless compartment by undergoing liquid-liquid phase separation upon binding to maternal mRNAs. Binds to the 3'-UTR of maternal mRNAs. Maternal mRNAs stored in the MARDO are translationally repressed. Essential for female fertility and oocyte-to-embryo transition by coordinating maternal mRNA storage, translation and degradation. In Rattus norvegicus (Rat), this protein is Zygote arrest protein 1.